The following is a 172-amino-acid chain: Bifunctional protein PyrR (172 aa).

A PRPP-binding motif is present at residues 90-102 (LVLIDDVLMSGRT).

This sequence belongs to the purine/pyrimidine phosphoribosyltransferase family. PyrR subfamily.

The catalysed reaction is UMP + diphosphate = 5-phospho-alpha-D-ribose 1-diphosphate + uracil. Regulates the transcription of the pyrimidine nucleotide (pyr) operon in response to exogenous pyrimidines. In terms of biological role, also displays a weak uracil phosphoribosyltransferase activity which is not physiologically significant. This chain is Bifunctional protein PyrR, found in Pseudomonas putida (strain W619).